Reading from the N-terminus, the 531-residue chain is Lysine--tRNA ligase, mitochondrial (531 aa).

Residues 1-18 (MISRGLLSKGILSIIKRK) constitute a mitochondrion transit peptide.

The protein belongs to the class-II aminoacyl-tRNA synthetase family.

The protein resides in the mitochondrion. It carries out the reaction tRNA(Lys) + L-lysine + ATP = L-lysyl-tRNA(Lys) + AMP + diphosphate. The protein is Lysine--tRNA ligase, mitochondrial (msk1) of Schizosaccharomyces pombe (strain 972 / ATCC 24843) (Fission yeast).